The primary structure comprises 189 residues: UPF0398 protein LCK_00599 (189 aa).

It belongs to the UPF0398 family.

The chain is UPF0398 protein LCK_00599 from Leuconostoc citreum (strain KM20).